The following is a 191-amino-acid chain: Lipopolysaccharide export system protein LptC (191 aa).

The chain crosses the membrane as a helical span at residues 7-25; that stretch reads WVIIVLSLAVLVMIGINMA.

The protein belongs to the LptC family. Component of the lipopolysaccharide transport and assembly complex. Interacts with LptA and the LptBFG transporter complex.

Its subcellular location is the cell inner membrane. Functionally, involved in the assembly of lipopolysaccharide (LPS). Required for the translocation of LPS from the inner membrane to the outer membrane. Facilitates the transfer of LPS from the inner membrane to the periplasmic protein LptA. Could be a docking site for LptA. The polypeptide is Lipopolysaccharide export system protein LptC (Escherichia coli O157:H7).